Consider the following 199-residue polypeptide: Recombination protein RecR (199 aa).

Residues 58 to 73 (CKKCFNLTSEEECDIC) form a C4-type zinc finger. Residues 81-175 (NIICVVAETK…KVTRIAYGLP (95 aa)) form the Toprim domain.

It belongs to the RecR family.

Functionally, may play a role in DNA repair. It seems to be involved in an RecBC-independent recombinational process of DNA repair. It may act with RecF and RecO. The protein is Recombination protein RecR of Prochlorococcus marinus (strain MIT 9515).